The following is a 43-amino-acid chain: Protein PsbN (43 aa).

A helical membrane pass occupies residues 5 to 27; the sequence is TLVTISISCLLVSFTGYAIYTSF.

Belongs to the PsbN family.

It is found in the plastid. The protein resides in the chloroplast thylakoid membrane. Functionally, may play a role in photosystem I and II biogenesis. This is Protein PsbN from Welwitschia mirabilis (Tree tumbo).